Reading from the N-terminus, the 72-residue chain is Large ribosomal subunit protein uL29 (72 aa).

The protein belongs to the universal ribosomal protein uL29 family.

The protein is Large ribosomal subunit protein uL29 of Rhodopirellula baltica (strain DSM 10527 / NCIMB 13988 / SH1).